The sequence spans 2179 residues: FRAS1-related extracellular matrix protein 1 (2179 aa).

Positions 1–21 (MNSLSWGAANAVLLLLLLAWA) are cleaved as a signal peptide. The Cell attachment site signature appears at 199–201 (RGD). 3 CSPG repeats span residues 296-390 (KAAF…LEVY), 413-500 (APRV…FRIF), and 521-615 (PPFL…FVLW). Asparagine 335 is a glycosylation site (N-linked (GlcNAc...) asparagine). N-linked (GlcNAc...) asparagine glycans are attached at residues asparagine 560 and asparagine 622. CSPG repeat units lie at residues 642-754 (KEAP…FSVS), 776-867 (QVPE…LEVT), and 887-982 (EPPV…LVVS). Asparagine 1014 carries N-linked (GlcNAc...) asparagine glycosylation. 6 CSPG repeats span residues 1024 to 1126 (PPSI…VYVT), 1147 to 1254 (EAPD…IQLS), 1275 to 1372 (KPML…FYLW), 1393 to 1485 (GDIV…FIIS), 1506 to 1596 (LPVV…FMAT), and 1628 to 1724 (PRIT…FQIM). N-linked (GlcNAc...) asparagine glycosylation occurs at asparagine 1566. The Calx-beta domain maps to 1731-1830 (ATPQILELKW…DDEVFEVILN (100 aa)). The short motif at 1907–1909 (RGD) is the Cell attachment site element. The 115-residue stretch at 2060-2174 (HSGYCHILIT…CRRAKPHNYV (115 aa)) folds into the C-type lectin domain. Residues cysteine 2151 and cysteine 2165 are joined by a disulfide bond.

This sequence belongs to the FRAS1 family. Interacts with FREM2.

The protein localises to the secreted. It localises to the extracellular space. It is found in the extracellular matrix. Its subcellular location is the basement membrane. Functionally, extracellular matrix protein that plays a role in epidermal differentiation and is required for epidermal adhesion during embryonic development. The chain is FRAS1-related extracellular matrix protein 1 from Homo sapiens (Human).